Consider the following 312-residue polypeptide: Glyoxylate/hydroxypyruvate reductase A (312 aa).

Residue R227 is part of the active site. Residue H275 is the Proton donor of the active site.

This sequence belongs to the D-isomer specific 2-hydroxyacid dehydrogenase family. GhrA subfamily.

The protein resides in the cytoplasm. The enzyme catalyses glycolate + NADP(+) = glyoxylate + NADPH + H(+). It catalyses the reaction (R)-glycerate + NAD(+) = 3-hydroxypyruvate + NADH + H(+). It carries out the reaction (R)-glycerate + NADP(+) = 3-hydroxypyruvate + NADPH + H(+). In terms of biological role, catalyzes the NADPH-dependent reduction of glyoxylate and hydroxypyruvate into glycolate and glycerate, respectively. The chain is Glyoxylate/hydroxypyruvate reductase A from Klebsiella pneumoniae (strain 342).